The sequence spans 689 residues: MSEKTFLVEIGTEELPPKALRSLAESFAANFTAELDNAGLAHGTVQWFAAPRRLALKVANLAEAQPDREIEKRGPAIAQAFDAEGKPSKAAEGWARGCGITVDQAERLTTDKGEWLLYRAHVKGESTEALLPNMVATSLAKLPIPKLMRWGASDVHFVRPVHTVTLLLGDKVIPATILGIQSDRVIRGHRFMGEPEFTIDNADQYPEILRERGKVIADYEERKAKIKADAEEAARKIGGNADLSESLLEEVASLVEWPVVLTAKFEEKFLAVPAEALVYTMKGDQKYFPVYANDGKLLPNFIFVANIESKDPQQIISGNEKVVRPRLADAEFFFNTDRKKRLEDNLPRLQTVLFQQQLGTLRDKTDRIQALAGWIAEQIGADVNHATRAGLLSKCDLMTNMVFEFTDTQGVMGMHYARHDGEAEDVAVALNEQYQPRFAGDDLPSNPVACALAIADKMDTLAGIFGIGQHPKGDKDPFALRRAALGVLRIIVEKNLNLDLQTLTEEAVRLYGDKLTNANVVDDVIDFMLGRFRAWYQDEGYTVDTIQAVLARRPTRPADFDARMKAVSHFRTLEAAAALAAANKRVSNILAKSDEVLSDRVNASTLKEPEEIKLAMQVVVLRDKLEPYFAEGRYQDALVELAELREPVDAFFDKVMVMVDDKELRLNRLTMLEKLRELFLRVADISLLQ.

The protein belongs to the class-II aminoacyl-tRNA synthetase family. As to quaternary structure, tetramer of two alpha and two beta subunits.

It is found in the cytoplasm. It carries out the reaction tRNA(Gly) + glycine + ATP = glycyl-tRNA(Gly) + AMP + diphosphate. The chain is Glycine--tRNA ligase beta subunit from Shigella flexneri serotype 5b (strain 8401).